Reading from the N-terminus, the 448-residue chain is Trigger factor (448 aa).

The region spanning 172 to 257 (GDRVTVDFVG…MKKIEWPHLP (86 aa)) is the PPIase FKBP-type domain.

It belongs to the FKBP-type PPIase family. Tig subfamily.

Its subcellular location is the cytoplasm. It carries out the reaction [protein]-peptidylproline (omega=180) = [protein]-peptidylproline (omega=0). Its function is as follows. Involved in protein export. Acts as a chaperone by maintaining the newly synthesized protein in an open conformation. Functions as a peptidyl-prolyl cis-trans isomerase. This Burkholderia ambifaria (strain ATCC BAA-244 / DSM 16087 / CCUG 44356 / LMG 19182 / AMMD) (Burkholderia cepacia (strain AMMD)) protein is Trigger factor.